The primary structure comprises 444 residues: Zinc finger protein ZIC 1 (444 aa).

Residues 222-257 (LICKWIEPEQLANPKKSCNKTFSTMHELVTHVTVEH) form a C2H2-type 1 zinc finger. Residues 271–293 (EECPREGKPFKAKYKLVNHIRVH) form a C2H2-type 2; degenerate zinc finger. 3 C2H2-type zinc fingers span residues 299 to 323 (FPCP…KRTH), 329 to 353 (FKCE…MHVH), and 359 to 381 (YLCK…MKVH). Residues 372–432 (SSLRKHMKVH…SSAGHHTASH (61 aa)) are disordered. The span at 383–432 (SSSQGSQPSPAASSGYESSTPPTIVSPSTENQTASSLSPSSSAGHHTASH) shows a compositional bias: low complexity.

This sequence belongs to the GLI C2H2-type zinc-finger protein family.

It is found in the nucleus. It localises to the cytoplasm. Its function is as follows. Acts as a transcriptional activator. Involved in neurogenesis. Plays important roles in the early stage of organogenesis of the CNS, as well as during dorsal spinal cord development and maturation of the cerebellum. Binds to the minimal GLI-consensus sequence 5'-TGGGTGGTC-3'. The sequence is that of Zinc finger protein ZIC 1 (ZIC1) from Gallus gallus (Chicken).